We begin with the raw amino-acid sequence, 455 residues long: Argininosuccinate synthase (455 aa).

ATP contacts are provided by residues 17–25 (AFSGGLDTS) and Ala-43. Tyr-99 is a binding site for L-citrulline. ATP is bound by residues Gly-129 and Thr-131. Residues Thr-131, Asn-135, and Asp-136 each coordinate L-aspartate. Asn-135 provides a ligand contact to L-citrulline. An ATP-binding site is contributed by Asp-136. The L-citrulline site is built by Arg-139 and Ser-192. An ATP-binding site is contributed by Asp-194. The L-citrulline site is built by Thr-201, Glu-203, and Glu-280. The segment covering 434-448 (TGLPQVDNNNLSSGR) has biased composition (polar residues). The interval 434–455 (TGLPQVDNNNLSSGRGLQDKRQ) is disordered.

It belongs to the argininosuccinate synthase family. Type 2 subfamily. As to quaternary structure, homotetramer.

The protein localises to the cytoplasm. The catalysed reaction is L-citrulline + L-aspartate + ATP = 2-(N(omega)-L-arginino)succinate + AMP + diphosphate + H(+). It functions in the pathway amino-acid biosynthesis; L-arginine biosynthesis; L-arginine from L-ornithine and carbamoyl phosphate: step 2/3. The chain is Argininosuccinate synthase (argG) from Yersinia pestis.